Here is a 1088-residue protein sequence, read N- to C-terminus: RNA-directed RNA polymerase (1088 aa).

In terms of domain architecture, RdRp catalytic spans 501–687 (LSYGDVTRFL…AKRYIAGGKI (187 aa)).

The protein belongs to the reoviridae RNA-directed RNA polymerase family. In terms of assembly, interacts with VP3 (Potential). Interacts with VP2; this interaction activates VP1. Interacts with NSP5; this interaction is probably necessary for the formation of functional virus factories. Interacts with NSP2; this interaction is weak. Mg(2+) serves as cofactor.

It localises to the virion. It carries out the reaction RNA(n) + a ribonucleoside 5'-triphosphate = RNA(n+1) + diphosphate. Functionally, RNA-directed RNA polymerase that is involved in both transcription and genome replication. Together with VP3 capping enzyme, forms an enzyme complex positioned near the channels situated at each of the five-fold vertices of the core. Following infection, the outermost layer of the virus is lost, leaving a double-layered particle (DLP) made up of the core and VP6 shell. VP1 then catalyzes the transcription of fully conservative plus-strand genomic RNAs that are extruded through the DLP's channels into the cytoplasm where they function as mRNAs for translation of viral proteins. One copy of each of the viral (+)RNAs is also recruited during core assembly, together with newly synthesized polymerase complexes and VP2. The polymerase of these novo-formed particles catalyzes the synthesis of complementary minus-strands leading to dsRNA formation. To do so, the polymerase specifically recognizes and binds 4 bases 5'-UGUG-3' in the conserved 3'-sequence of plus-strand RNA templates. VP2 presumably activates the autoinhibited VP1-RNA complex to coordinate packaging and genome replication. Once dsRNA synthesis is complete, the polymerase switches to the transcriptional mode, thus providing secondary transcription. The polypeptide is RNA-directed RNA polymerase (Rotavirus A (isolate RVA/Human/United States/WI61/1983/G9P1A[8]) (RV-A)).